A 192-amino-acid polypeptide reads, in one-letter code: Ras-like protein 2 (192 aa).

Residue 12–19 coordinates GTP; it reads GGGGVGKS. The Effector region signature appears at 34 to 42; it reads YDPTIEDSY. Cys-46 carries S-palmitoyl cysteine lipidation. GTP is bound by residues 59–63 and 118–121; these read DTAGQ and NKCD. S-palmitoyl cysteine attachment occurs at residues Cys-120 and Cys-147. Cys-189 is modified (cysteine methyl ester). A lipid anchor (S-farnesyl cysteine) is attached at Cys-189. A propeptide spans 190 to 192 (removed in mature form); it reads CLM.

It belongs to the small GTPase superfamily. Ras family. In terms of assembly, interacts with hzg.

The protein localises to the cell membrane. It carries out the reaction GTP + H2O = GDP + phosphate + H(+). Alternates between an inactive form bound to GDP and an active form bound to GTP. Activated by a guanine nucleotide-exchange factor (GEF) and inactivated by a GTPase-activating protein (GAP). In terms of biological role, may be involved in endocytic processes and/or other transport pathways mediated by vesicle trafficking. May interact functionally with ROP protein. Ras proteins bind GDP/GTP and possess intrinsic GTPase activity. The chain is Ras-like protein 2 (Ras64B) from Drosophila melanogaster (Fruit fly).